A 152-amino-acid polypeptide reads, in one-letter code: UPF0266 membrane protein YobD (152 aa).

3 helical membrane passes run 6-26 (LVLILFIAALLAYALYDQFIM), 45-65 (VDSVIFVGLVAILIYNNVTSH), and 67-87 (AQMTTWLLSALALMGFYIFWI).

The protein belongs to the UPF0266 family.

It is found in the cell inner membrane. The chain is UPF0266 membrane protein YobD from Salmonella arizonae (strain ATCC BAA-731 / CDC346-86 / RSK2980).